Reading from the N-terminus, the 506-residue chain is Maturase K (506 aa).

The protein belongs to the intron maturase 2 family. MatK subfamily.

Its subcellular location is the plastid. It is found in the chloroplast. In terms of biological role, usually encoded in the trnK tRNA gene intron. Probably assists in splicing its own and other chloroplast group II introns. This chain is Maturase K, found in Rhododendron tomentosum (Marsh Labrador tea).